Reading from the N-terminus, the 477-residue chain is Calcium uptake protein 1, mitochondrial (477 aa).

A mitochondrion-targeting transit peptide spans 1–33 (MFRLNTLSALAELAVGSRWYHGASQPTQTKRRL). A disordered region spans residues 57-107 (AESPPCVNSKKPDTEDKERNKDSGEVSSREGRAADAAAEPYPEDKKKKRSG). Over residues 66–89 (KKPDTEDKERNKDSGEVSSREGRA) the composition is skewed to basic and acidic residues. The polybasic region stretch occupies residues 101–112 (KKKKRSGFRDRK). Serine 124 is subject to Phosphoserine; by PKB. Residues 128–131 (KIFR) form a k/R-ring region. The 36-residue stretch at 220–255 (TPQRNFEIAFKMFDLNGDGEVDMEEFEQVQSIIRSQ) folds into the EF-hand 1 domain. Residues aspartate 233, asparagine 235, aspartate 237, glutamate 239, and glutamate 244 each coordinate Ca(2+). Residues 261 to 265 (RHRDR) form a k/R-ring region. Residues 356–376 (KDGKGLTFQEVENFFTFLKNI) enclose the EF-hand 2; degenerate domain. The 36-residue stretch at 410-445 (LSDHVCDVVFALFDCDGNGELSNKEFVSIMKQRLMR) folds into the EF-hand 3 domain. 5 residues coordinate Ca(2+): aspartate 423, aspartate 425, asparagine 427, glutamate 429, and glutamate 434. Position 457 is an asymmetric dimethylarginine (arginine 457). Positions 457 to 467 (RLMQAMWKCAQ) are C-helix region.

The protein belongs to the MICU1 family. MICU1 subfamily. As to quaternary structure, heterodimer; disulfide-linked; heterodimerizes with MICU2 or MICU3. Homodimer; disulfide-linked. Component of the uniplex complex, composed of MCU, EMRE/SMDT1, MICU1 and MICU2 (or MICU3) in a 4:4:1:1 stoichiometry. The composition of calcium sensors within the uniplex complex can differ depending on tissues: a MICU1 homodimer can be present instead of the MICU1-MICU2 heterodimer in skeletal-muscle and kidney. MICU1 is recruited to the uniplex complex by EMRE/SMDT1, and it associates with MCU at low calcium levels, occluding the pore of the MCU channel. Associates with the MICOS complex. Interacts with SLC25A23. Interacts with CHCHD4/MIA40; which introduces the interchain disulfide bond with MICU2. Interacts (when methylated) with UCP2; leading to decrease the calcium sensitivity of MICU1. In terms of assembly, heterodimer; disulfide-linked; heterodimerizes with MICU2 or MICU3. Heterodimerizes with MICU3 in skeletal muscle. Component of the uniplex complex, composed of MCU, EMRE/SMDT1, MICU1 and MICU2 (or MICU3) in a 4:4:1:1 stoichiometry. Also localizes to mitochondrial cristae junctions. Phosphorylation at Ser-124 by AKT1 impairs its maturation and stability. In terms of processing, asymmetric dimethylation at Arg-457 by PRMT1 decreases the calcium sensitivity of MICU1 by promoting interaction with UCP2. Post-translationally, degraded by YME1L1 when not complexed as homodimer or heterodimer. Not degraded when complexed as homodimer or heterodimer; the presence of the interchain disulfide bond protecting MICU1 from degradation by YME1L1. As to expression, expressed in skeletal muscle, heart, kidney, liver, brain, lung, fat and spleen. Specifically expressed in the skeletal muscle.

Its subcellular location is the mitochondrion intermembrane space. The protein resides in the mitochondrion inner membrane. Functionally, calcium sensor of the mitochondrial calcium uniporter (MCU) channel, which senses calcium level via its EF-hand domains. MICU1 and MICU2 (or MICU3) form a disulfide-linked heterodimer that stimulates and inhibits MCU activity, depending on the concentration of calcium. At low calcium levels, MICU1 occludes the pore of the MCU channel, preventing mitochondrial calcium uptake. At higher calcium levels, calcium-binding to MICU1 and MICU2 (or MICU3) induces a conformational change that weakens MCU-MICU1 interactions and moves the MICU1-MICU2 heterodimer away from the pore, allowing calcium permeation through the MCU channel. Also required to protect against manganese toxicity by preventing manganese uptake by MCU: mechanistically, manganese-binding to its EF-hand domains does not induce any conformational change, maintaining MCU pore occlusion. Acts as a regulator of mitochondrial cristae structure independently of its ability to regulate the mitochondrial calcium uniporter channel. Regulates glucose-dependent insulin secretion in pancreatic beta-cells by regulating mitochondrial calcium uptake. Induces T-helper 1-mediated autoreactivity, which is accompanied by the release of IFNG. Isoform that regulates mitochondrial calcium uniporter (MCU) in the skeletal muscle. Compared to other isoforms, this isoform has higher affinity for calcium, promoting mitochondrial calcium uptake at lower calcium concentrations. This allows a rapid response of mitochondrial metabolism and ensures sustained ATP production needed for resistance and strenuous exercise. This Mus musculus (Mouse) protein is Calcium uptake protein 1, mitochondrial.